The chain runs to 461 residues: Asparagine--tRNA ligase (461 aa).

This sequence belongs to the class-II aminoacyl-tRNA synthetase family. As to quaternary structure, homodimer.

It localises to the cytoplasm. It catalyses the reaction tRNA(Asn) + L-asparagine + ATP = L-asparaginyl-tRNA(Asn) + AMP + diphosphate + H(+). This Nitratidesulfovibrio vulgaris (strain DP4) (Desulfovibrio vulgaris) protein is Asparagine--tRNA ligase.